The primary structure comprises 271 residues: Zinc finger CCHC domain-containing protein 9 (271 aa).

Positions Met1 to Tyr67 are disordered. The segment covering Val7–Ser20 has biased composition (polar residues). The segment covering Glu22 to Asp33 has biased composition (basic and acidic residues). Polar residues predominate over residues Ser35–Arg46. Positions Ala56–Lys65 are enriched in basic residues. 4 consecutive CCHC-type zinc fingers follow at residues Met128–Ala145, Gly155–Ala172, Ala184–Asp201, and Gly211–Glu228.

Detected in brain cortex and in testis.

The protein localises to the nucleus. It localises to the nucleolus. Its function is as follows. May down-regulate transcription mediated by NF-kappa-B and the serum response element. The chain is Zinc finger CCHC domain-containing protein 9 (Zcchc9) from Mus musculus (Mouse).